The following is a 589-amino-acid chain: Vesicular glutamate transporter 3 (589 aa).

Topologically, residues 1-76 (MPFKAFDTFK…CHCCGLPKRY (76 aa)) are cytoplasmic. The segment covering 40-49 (TEEEDNIELN) has biased composition (acidic residues). The tract at residues 40–61 (TEEEDNIELNEEGRPVQTSRPS) is disordered. Residues 77–97 (IIAIMSGLGFCISFGIRCNLG) form a helical membrane-spanning segment. At 98–130 (VAIVEMVNNSTVYVDGKPEIQTAQFNWDPETVG) the chain is on the vesicular side. A glycan (N-linked (GlcNAc...) asparagine) is linked at Asn-106. The helical transmembrane segment at 131 to 151 (LIHGSFFWGYIMTQIPGGFIS) threads the bilayer. Topologically, residues 152–153 (NK) are cytoplasmic. A helical membrane pass occupies residues 154-174 (FAANRVFGAAIFLTSTLNMFI). Over 175–182 (PSAARVHY) the chain is Vesicular. The chain crosses the membrane as a helical span at residues 183 to 203 (GCVMCVRILQGLVEGVTYPAC). Residues 204 to 221 (HGMWSKWAPPLERSRLAT) lie on the Cytoplasmic side of the membrane. Residues 222-242 (TSFCGSYAGAVVAMPLAGVLV) traverse the membrane as a helical segment. Residues 243-249 (QYIGWSS) lie on the Vesicular side of the membrane. Residues 250 to 270 (VFYIYGMFGIIWYMFWLLQAY) traverse the membrane as a helical segment. Residues 271–314 (ECPAAHPTISNEEKTYIETSIGEGANVVSLSKFSTPWKRFFTSL) lie on the Cytoplasmic side of the membrane. The chain crosses the membrane as a helical span at residues 315 to 335 (PVYAIIVANFCRSWTFYLLLI). Topologically, residues 336 to 353 (SQPAYFEEVFGFAISKVG) are vesicular. A helical membrane pass occupies residues 354–374 (LLSAVPHMVMTIVVPIGGQLA). The Cytoplasmic portion of the chain corresponds to 375–390 (DYLRSRQILTTTAVRK). Residues 391–411 (IMNCGGFGMEATLLLVVGFSH) traverse the membrane as a helical segment. Over 412–413 (TK) the chain is Vesicular. A helical transmembrane segment spans residues 414-434 (GVAISFLVLAVGFSGFAISGF). The Cytoplasmic segment spans residues 435–447 (NVNHLDIAPRYAS). The chain crosses the membrane as a helical span at residues 448–468 (ILMGISNGVGTLSGMVCPLIV). The Vesicular portion of the chain corresponds to 469-481 (GAMTRHKTREEWQ). A helical membrane pass occupies residues 482–502 (NVFLIAALVHYSGVIFYGVFA). At 503–586 (SGEKQEWADP…SYQNEERNFS (84 aa)) the chain is on the cytoplasmic side. The disordered stretch occupies residues 559–589 (KKEWKGQRGATLDEEELTSYQNEERNFSTIS). A compositionally biased stretch (basic and acidic residues) spans 580-589 (NEERNFSTIS).

It belongs to the major facilitator superfamily. Sodium/anion cotransporter family. VGLUT subfamily. As to expression, expressed in amygdala, cerebellum, hippocampus, medulla, spinal cord and thalamus.

Its subcellular location is the cytoplasmic vesicle. The protein resides in the secretory vesicle. It is found in the synaptic vesicle membrane. It localises to the cell membrane. The protein localises to the synapse. Its subcellular location is the synaptosome. The catalysed reaction is L-glutamate(out) = L-glutamate(in). It carries out the reaction 3 Na(+)(out) + phosphate(out) = 3 Na(+)(in) + phosphate(in). The enzyme catalyses chloride(in) = chloride(out). Its activity is regulated as follows. The L-glutamate uniporter activity exhibits a biphasic dependence on chloride concentration. Chloride channel activity is allosterically activated by lumenal H(+) and Cl(-) leading to synaptic vesicles acidification. The glutamate transport activity is allosterically activated by lumenal H(+) and Cl(-), preventing non-vesicular L-glutamate release. Functionally, multifunctional transporter that transports L-glutamate as well as multiple ions such as chloride, sodium and phosphate. At the synaptic vesicle membrane, mainly functions as an uniporter that mediates the uptake of L-glutamate into synaptic vesicles at presynaptic nerve terminals of excitatory neural cells. The L-glutamate uniporter activity is electrogenic and is driven by the proton electrochemical gradient, mainly by the electrical gradient established by the vacuolar H(+)-ATPase across the synaptic vesicle membrane. In addition, functions as a chloride channel that allows a chloride permeation through the synaptic vesicle membrane that affects the proton electrochemical gradient and promotes synaptic vesicles acidification. At the plasma membrane, following exocytosis, functions as a symporter of Na(+) and phosphate from the extracellular space to the cytoplasm allowing synaptic phosphate homeostasis regulation. The symporter activity is electrogenic. Moreover, operates synergistically with SLC18A3/VACHT under a constant H(+) gradient, thereby allowing striatal vesicular acetylcholine uptake. This Homo sapiens (Human) protein is Vesicular glutamate transporter 3.